The chain runs to 695 residues: NADPH--cytochrome P450 reductase (695 aa).

Residues 1–8 (MAQLDTLD) are Lumenal-facing. The helical transmembrane segment at 9–31 (VVVLAVLLAGSIAYFTKGTFWAV) threads the bilayer. Residues 32-695 (AKDPYASSGP…SGSYQEDVWS (664 aa)) lie on the Cytoplasmic side of the membrane. In terms of domain architecture, Flavodoxin-like spans 66-221 (CVIFYGSQTG…DFLAWKEPMW (156 aa)). Residues 72-77 (SQTGTA), 123-126 (ATYG), 169-178 (LGNNTYEHYN), and D204 contribute to the FMN site. The region spanning 277–538 (HNPYIAPIVE…HVRHSNFKLP (262 aa)) is the FAD-binding FR-type domain. Residue R296 participates in NADP(+) binding. FAD-binding positions include 451-454 (RYYS), 469-471 (TAV), and 486-489 (GVTT). Positions 497–516 (QKQNGDPSPDPHGQTYAING) are disordered. NADP(+)-binding positions include T552, 614–615 (SR), 620–624 (KVYVQ), and E656. W694 is an FAD binding site.

The protein belongs to the NADPH--cytochrome P450 reductase family. In the N-terminal section; belongs to the flavodoxin family. It in the C-terminal section; belongs to the flavoprotein pyridine nucleotide cytochrome reductase family. It depends on FAD as a cofactor. The cofactor is FMN.

It localises to the endoplasmic reticulum membrane. The protein localises to the mitochondrion outer membrane. The protein resides in the cell membrane. It carries out the reaction 2 oxidized [cytochrome P450] + NADPH = 2 reduced [cytochrome P450] + NADP(+) + H(+). Its function is as follows. This enzyme is required for electron transfer from NADP to cytochrome P450 in microsomes. It can also provide electron transfer to heme oxygenase and cytochrome B5. Involved in ergosterol biosynthesis. This chain is NADPH--cytochrome P450 reductase, found in Emericella nidulans (strain FGSC A4 / ATCC 38163 / CBS 112.46 / NRRL 194 / M139) (Aspergillus nidulans).